A 734-amino-acid polypeptide reads, in one-letter code: Photosystem I P700 chlorophyll a apoprotein A2 (734 aa).

The next 8 membrane-spanning stretches (helical) occupy residues 46-69, 135-158, 175-199, 273-291, 330-353, 369-395, 417-439, and 517-535; these read IFASHFGQLAIIFLWTSGNLFHVA, LYIGALFLMFCSALFLIAGRLHLQ, LNHHLSGLFGVSSLAWTGHLVHVAL, IAHHHLAIALVFLIAGHMY, LHFQLGLALASLGVVTSLVAQHMY, AALYTHHQYIAGFIMTGAFAHGAIFFI, AIISHLSWASLFLGFHTLGLYVH, and FLVHHAIALGLHTTTLILV. [4Fe-4S] cluster-binding residues include C559 and C568. 2 helical membrane-spanning segments follow: residues 575 to 596 and 643 to 665; these read AFYLAVFWMLNTVGWVTFYWHW and LSVWAWMFLFGHLVWATGFMFLI. Chlorophyll a is bound by residues H654, M662, and Y670. Residue W671 participates in phylloquinone binding. Residues 707-727 traverse the membrane as a helical segment; that stretch reads LVGLVHFSVGYIFTYAAFLIA.

It belongs to the PsaA/PsaB family. The PsaA/B heterodimer binds the P700 chlorophyll special pair and subsequent electron acceptors. PSI consists of a core antenna complex that captures photons, and an electron transfer chain that converts photonic excitation into a charge separation. The eukaryotic PSI reaction center is composed of at least 11 subunits. It depends on P700 is a chlorophyll a/chlorophyll a' dimer, A0 is one or more chlorophyll a, A1 is one or both phylloquinones and FX is a shared 4Fe-4S iron-sulfur center. as a cofactor.

The protein localises to the plastid. It localises to the chloroplast thylakoid membrane. It carries out the reaction reduced [plastocyanin] + hnu + oxidized [2Fe-2S]-[ferredoxin] = oxidized [plastocyanin] + reduced [2Fe-2S]-[ferredoxin]. Functionally, psaA and PsaB bind P700, the primary electron donor of photosystem I (PSI), as well as the electron acceptors A0, A1 and FX. PSI is a plastocyanin-ferredoxin oxidoreductase, converting photonic excitation into a charge separation, which transfers an electron from the donor P700 chlorophyll pair to the spectroscopically characterized acceptors A0, A1, FX, FA and FB in turn. Oxidized P700 is reduced on the lumenal side of the thylakoid membrane by plastocyanin. This chain is Photosystem I P700 chlorophyll a apoprotein A2, found in Gnetum parvifolium (Small-leaved jointfir).